The chain runs to 437 residues: Trigger factor (437 aa).

Positions 164 to 249 (GDFAKFDFEG…LHEIQCKKIG (86 aa)) constitute a PPIase FKBP-type domain.

This sequence belongs to the FKBP-type PPIase family. Tig subfamily.

It localises to the cytoplasm. The catalysed reaction is [protein]-peptidylproline (omega=180) = [protein]-peptidylproline (omega=0). Its function is as follows. Involved in protein export. Acts as a chaperone by maintaining the newly synthesized protein in an open conformation. Functions as a peptidyl-prolyl cis-trans isomerase. In Campylobacter hominis (strain ATCC BAA-381 / DSM 21671 / CCUG 45161 / LMG 19568 / NCTC 13146 / CH001A), this protein is Trigger factor.